A 294-amino-acid polypeptide reads, in one-letter code: tRNA dimethylallyltransferase (294 aa).

Residue 10–17 participates in ATP binding; sequence GPTAVGKT. 12–17 contributes to the substrate binding site; the sequence is TAVGKT. Positions 35–38 are interaction with substrate tRNA; the sequence is DSQQ.

Belongs to the IPP transferase family. As to quaternary structure, monomer. The cofactor is Mg(2+).

The catalysed reaction is adenosine(37) in tRNA + dimethylallyl diphosphate = N(6)-dimethylallyladenosine(37) in tRNA + diphosphate. Catalyzes the transfer of a dimethylallyl group onto the adenine at position 37 in tRNAs that read codons beginning with uridine, leading to the formation of N6-(dimethylallyl)adenosine (i(6)A). The polypeptide is tRNA dimethylallyltransferase (Streptococcus suis (strain 98HAH33)).